We begin with the raw amino-acid sequence, 472 residues long: Pentatricopeptide repeat-containing protein At3g18970 (472 aa).

8 PPR repeats span residues 107 to 139 (NERT…MVKK), 146 to 180 (SELI…TSVT), 181 to 216 (WNAM…GSGV), 219 to 253 (TDTT…GFTP), 256 to 286 (DVFI…MKVK), 287 to 321 (NVFT…GIKP), 322 to 352 (NEIT…MKTR), and 358 to 388 (VIEH…MPIK). Positions 393 to 472 (LLRSLCNACS…IKTRPGYSFV (80 aa)) are type E motif; degenerate.

It belongs to the PPR family. PCMP-E subfamily.

This is Pentatricopeptide repeat-containing protein At3g18970 (PCMP-E93) from Arabidopsis thaliana (Mouse-ear cress).